We begin with the raw amino-acid sequence, 275 residues long: 2,3,4,5-tetrahydropyridine-2,6-dicarboxylate N-succinyltransferase (275 aa).

Substrate contacts are provided by Arg106 and Asp143.

The protein belongs to the transferase hexapeptide repeat family. As to quaternary structure, homotrimer.

Its subcellular location is the cytoplasm. It carries out the reaction (S)-2,3,4,5-tetrahydrodipicolinate + succinyl-CoA + H2O = (S)-2-succinylamino-6-oxoheptanedioate + CoA. Its pathway is amino-acid biosynthesis; L-lysine biosynthesis via DAP pathway; LL-2,6-diaminopimelate from (S)-tetrahydrodipicolinate (succinylase route): step 1/3. This is 2,3,4,5-tetrahydropyridine-2,6-dicarboxylate N-succinyltransferase from Paraburkholderia xenovorans (strain LB400).